Consider the following 302-residue polypeptide: UDP-N-acetylenolpyruvoylglucosamine reductase (302 aa).

The region spanning 27–192 (KVGGAVDYLA…LSAKFALRPG (166 aa)) is the FAD-binding PCMH-type domain. R171 is an active-site residue. Residue S221 is the Proton donor of the active site. The active site involves E291.

It belongs to the MurB family. FAD is required as a cofactor.

The protein localises to the cytoplasm. The enzyme catalyses UDP-N-acetyl-alpha-D-muramate + NADP(+) = UDP-N-acetyl-3-O-(1-carboxyvinyl)-alpha-D-glucosamine + NADPH + H(+). It participates in cell wall biogenesis; peptidoglycan biosynthesis. Its function is as follows. Cell wall formation. This Streptococcus suis (strain 98HAH33) protein is UDP-N-acetylenolpyruvoylglucosamine reductase.